We begin with the raw amino-acid sequence, 122 residues long: Small ribosomal subunit protein uS13 (122 aa).

The segment at 97-122 is disordered; the sequence is PVRGQKTKSNARTRKGPRPSRIKKKK. The segment covering 101–122 has biased composition (basic residues); that stretch reads QKTKSNARTRKGPRPSRIKKKK.

The protein belongs to the universal ribosomal protein uS13 family. In terms of assembly, part of the 30S ribosomal subunit. Forms a loose heterodimer with protein S19. Forms two bridges to the 50S subunit in the 70S ribosome.

Located at the top of the head of the 30S subunit, it contacts several helices of the 16S rRNA. In the 70S ribosome it contacts the 23S rRNA (bridge B1a) and protein L5 of the 50S subunit (bridge B1b), connecting the 2 subunits; these bridges are implicated in subunit movement. Contacts the tRNAs in the A and P-sites. The protein is Small ribosomal subunit protein uS13 of Thermosipho melanesiensis (strain DSM 12029 / CIP 104789 / BI429).